The sequence spans 270 residues: UPF0354 protein BCAH820_4810 (270 aa).

The protein belongs to the UPF0354 family.

This is UPF0354 protein BCAH820_4810 from Bacillus cereus (strain AH820).